The sequence spans 288 residues: Nucleotide-binding protein ASA_0318 (288 aa).

8–15 (GRSGSGKT) provides a ligand contact to ATP. 56–59 (DVRN) contributes to the GTP binding site.

This sequence belongs to the RapZ-like family.

In terms of biological role, displays ATPase and GTPase activities. The polypeptide is Nucleotide-binding protein ASA_0318 (Aeromonas salmonicida (strain A449)).